Consider the following 105-residue polypeptide: U1-sicaritoxin-Li1b (105 aa).

An N-terminal signal peptide occupies residues 1 to 19 (MKLLFEGLLVLVLIAFVVA). Positions 20–36 (EFESDAEKWEALITQER) are excised as a propeptide. Intrachain disulfides connect cysteine 38-cysteine 55, cysteine 46-cysteine 60, cysteine 54-cysteine 73, and cysteine 62-cysteine 71. Arginine amide is present on arginine 82. A propeptide spanning residues 86–105 (ALMVDPETHRMLSLHRLSEE) is cleaved from the precursor.

Belongs to the neurotoxin 28 (Litx) family. As to expression, expressed by the venom gland.

Its subcellular location is the secreted. In terms of biological role, toxin active against insects (S.frugiperda larvae). May act on sodium (Nav) or calcium (Cav) channels. The polypeptide is U1-sicaritoxin-Li1b (Loxosceles intermedia (Brown spider)).